The following is a 229-amino-acid chain: MEIVIMIQEALKALRRGEIVLVFDADNRERETDMIVAAEKIKPEHIRIMRNDAGGLICVPVSWENSEKLGIPYMTDIMEEASGRYPVLGKLSPHDIPYDEKSAFSITVNHRKTFTGITDNDRALTIGELAGICRDDRHESFGDLFRSPGHVTLLRAADGHVLRRGGHTEMSIALMEMAGLTGVAVCCEMMDDRTGNSLSTEDAMKYAREHDLIFMSGAELIESYMEFRS.

Residues 28–29 (RE), aspartate 33, 164–168 (RGGHT), and glutamate 188 each bind D-ribulose 5-phosphate. Glutamate 29 serves as a coordination point for Mg(2+). Histidine 167 is a binding site for Mg(2+).

It belongs to the DHBP synthase family. Homodimer. Mg(2+) serves as cofactor. It depends on Mn(2+) as a cofactor.

It catalyses the reaction D-ribulose 5-phosphate = (2S)-2-hydroxy-3-oxobutyl phosphate + formate + H(+). It participates in cofactor biosynthesis; riboflavin biosynthesis; 2-hydroxy-3-oxobutyl phosphate from D-ribulose 5-phosphate: step 1/1. Functionally, catalyzes the conversion of D-ribulose 5-phosphate to formate and 3,4-dihydroxy-2-butanone 4-phosphate. This Methanothermobacter thermautotrophicus (strain ATCC 29096 / DSM 1053 / JCM 10044 / NBRC 100330 / Delta H) (Methanobacterium thermoautotrophicum) protein is 3,4-dihydroxy-2-butanone 4-phosphate synthase.